The sequence spans 270 residues: 3-methyl-2-oxobutanoate hydroxymethyltransferase (270 aa).

Mg(2+) contacts are provided by aspartate 48 and aspartate 87. Residues 48–49, aspartate 87, and lysine 117 each bind 3-methyl-2-oxobutanoate; that span reads DS. Glutamate 119 is a binding site for Mg(2+). The Proton acceptor role is filled by glutamate 186.

The protein belongs to the PanB family. In terms of assembly, homodecamer; pentamer of dimers. Mg(2+) is required as a cofactor.

Its subcellular location is the cytoplasm. It carries out the reaction 3-methyl-2-oxobutanoate + (6R)-5,10-methylene-5,6,7,8-tetrahydrofolate + H2O = 2-dehydropantoate + (6S)-5,6,7,8-tetrahydrofolate. Its pathway is cofactor biosynthesis; (R)-pantothenate biosynthesis; (R)-pantoate from 3-methyl-2-oxobutanoate: step 1/2. Functionally, catalyzes the reversible reaction in which hydroxymethyl group from 5,10-methylenetetrahydrofolate is transferred onto alpha-ketoisovalerate to form ketopantoate. This chain is 3-methyl-2-oxobutanoate hydroxymethyltransferase, found in Synechococcus sp. (strain RCC307).